A 365-amino-acid polypeptide reads, in one-letter code: WAT1-related protein At4g01430 (365 aa).

The next 10 helical transmembrane spans lie at Trp-7 to Val-27, Ile-39 to Trp-59, Phe-76 to Tyr-96, Thr-100 to Phe-120, Ala-132 to Phe-152, Trp-183 to Phe-203, Tyr-216 to Tyr-236, Phe-250 to Thr-270, Val-280 to Ile-300, and Leu-305 to Trp-325. The EamA 1 domain maps to Met-20 to Thr-151. Positions Tyr-216–Leu-324 constitute an EamA 2 domain. The disordered stretch occupies residues Leu-339–Val-365. Over residues Lys-348–Val-365 the composition is skewed to basic and acidic residues.

It belongs to the drug/metabolite transporter (DMT) superfamily. Plant drug/metabolite exporter (P-DME) (TC 2.A.7.4) family.

The protein localises to the membrane. This is WAT1-related protein At4g01430 from Arabidopsis thaliana (Mouse-ear cress).